The sequence spans 373 residues: Dual-specificity RNA methyltransferase RlmN (373 aa).

E94 serves as the catalytic Proton acceptor. Positions 100–339 (EDDRATLCVS…VIVRKTRGDD (240 aa)) constitute a Radical SAM core domain. A disulfide bridge connects residues C107 and C344. Positions 114, 118, and 121 each coordinate [4Fe-4S] cluster. Residues 168–169 (GE), S200, 222–224 (SIH), and N301 contribute to the S-adenosyl-L-methionine site. The active-site S-methylcysteine intermediate is C344.

This sequence belongs to the radical SAM superfamily. RlmN family. It depends on [4Fe-4S] cluster as a cofactor.

The protein localises to the cytoplasm. The enzyme catalyses adenosine(2503) in 23S rRNA + 2 reduced [2Fe-2S]-[ferredoxin] + 2 S-adenosyl-L-methionine = 2-methyladenosine(2503) in 23S rRNA + 5'-deoxyadenosine + L-methionine + 2 oxidized [2Fe-2S]-[ferredoxin] + S-adenosyl-L-homocysteine. It carries out the reaction adenosine(37) in tRNA + 2 reduced [2Fe-2S]-[ferredoxin] + 2 S-adenosyl-L-methionine = 2-methyladenosine(37) in tRNA + 5'-deoxyadenosine + L-methionine + 2 oxidized [2Fe-2S]-[ferredoxin] + S-adenosyl-L-homocysteine. In terms of biological role, specifically methylates position 2 of adenine 2503 in 23S rRNA and position 2 of adenine 37 in tRNAs. m2A2503 modification seems to play a crucial role in the proofreading step occurring at the peptidyl transferase center and thus would serve to optimize ribosomal fidelity. The sequence is that of Dual-specificity RNA methyltransferase RlmN from Shewanella denitrificans (strain OS217 / ATCC BAA-1090 / DSM 15013).